The following is a 370-amino-acid chain: Cytochrome b (370 aa).

4 consecutive transmembrane segments (helical) span residues 25–45, 69–90, 105–125, and 170–190; these read FGSMLLACLTLQLLTGFFLAV, WMMQNLHAIGASMFFICIYIHI, WLSGTTLLIMLMATAFFGYVL, and FFALHFILPFGIISLSSLHIL. Residues H75 and H89 each contribute to the heme b site. 2 residues coordinate heme b: H174 and H188. H193 contributes to the a ubiquinone binding site. 4 helical membrane passes run 218–238, 280–300, 312–332, and 339–358; these read YKDMLMLTIMTIMLLTIVSFF, LGGALALTMSIMMLLTLPFTH, FMQLTFWTFTATFLVISWTAT, and FTTISQVAALMYFLFFISNP.

This sequence belongs to the cytochrome b family. As to quaternary structure, the cytochrome bc1 complex contains 3 respiratory subunits (MT-CYB, CYC1 and UQCRFS1), 2 core proteins (UQCRC1 and UQCRC2) and probably 6 low-molecular weight proteins. It depends on heme b as a cofactor.

It localises to the mitochondrion inner membrane. Functionally, component of the ubiquinol-cytochrome c reductase complex (complex III or cytochrome b-c1 complex) that is part of the mitochondrial respiratory chain. The b-c1 complex mediates electron transfer from ubiquinol to cytochrome c. Contributes to the generation of a proton gradient across the mitochondrial membrane that is then used for ATP synthesis. This Chilabothrus strigilatus fosteri (Bimini Island boa constrictor) protein is Cytochrome b (MT-CYB).